The primary structure comprises 369 residues: Glutamate 5-kinase (369 aa).

Lysine 9 contacts ATP. Substrate-binding residues include serine 49, aspartate 136, and asparagine 148. ATP-binding positions include threonine 168–aspartate 169 and threonine 210–lysine 216. Positions glutamine 275–tryptophan 355 constitute a PUA domain.

This sequence belongs to the glutamate 5-kinase family.

It is found in the cytoplasm. The enzyme catalyses L-glutamate + ATP = L-glutamyl 5-phosphate + ADP. It participates in amino-acid biosynthesis; L-proline biosynthesis; L-glutamate 5-semialdehyde from L-glutamate: step 1/2. Functionally, catalyzes the transfer of a phosphate group to glutamate to form L-glutamate 5-phosphate. This is Glutamate 5-kinase from Streptococcus pneumoniae (strain Hungary19A-6).